The chain runs to 202 residues: Protein lin-28 homolog A (202 aa).

Disordered regions lie at residues methionine 1 to histidine 33 and serine 100 to glycine 128. The span at glutamate 18–serine 29 shows a compositional bias: acidic residues. Residues histidine 33–proline 106 enclose the CSD domain. Positions glycine 107–arginine 130 are flexible linker. CCHC-type zinc fingers lie at residues aspartate 129–leucine 146 and lysine 151–isoleucine 168. Cysteine 131, cysteine 134, histidine 139, cysteine 144, cysteine 153, cysteine 156, histidine 161, and cysteine 166 together coordinate Zn(2+). The disordered stretch occupies residues alanine 170–aspartate 202. The segment covering glutamine 171–threonine 185 has biased composition (polar residues). Serine 174 carries the phosphoserine modification.

Belongs to the lin-28 family. In terms of assembly, monomer.

The protein resides in the cytoplasm. The protein localises to the rough endoplasmic reticulum. It is found in the P-body. It localises to the stress granule. Its subcellular location is the nucleus. The protein resides in the nucleolus. RNA-binding protein that inhibits processing of pre-let-7 miRNAs and regulates translation of mRNAs that control developmental timing, pluripotency and metabolism. Seems to recognize a common structural G-quartet (G4) feature in its miRNA and mRNA targets. 'Translational enhancer' that drives specific mRNAs to polysomes and increases the efficiency of protein synthesis. Its association with the translational machinery and target mRNAs results in an increased number of initiation events per molecule of mRNA and, indirectly, in mRNA stabilization. Suppressor of microRNA (miRNA) biogenesis, including that of let-7. Binds specific target miRNA precursors (pre-miRNAs), recognizing an 5'-GGAG-3' motif found in their terminal loop, and recruits uridylyltransferase. This results in the terminal uridylation of target pre-miRNAs. Uridylated pre-miRNAs fail to be processed by Dicer and undergo degradation. Localized to the periendoplasmic reticulum area, binds to a large number of spliced mRNAs and inhibits the translation of mRNAs destined for the ER, reducing the synthesis of transmembrane proteins, ER or Golgi lumen proteins, and secretory proteins. Binds to and enhances the translation of mRNAs for several metabolic enzymes, increasing glycolysis and oxidative phosphorylation. Which, with the let-7 repression may enhance tissue repair in adult tissue. The sequence is that of Protein lin-28 homolog A (lin28a) from Danio rerio (Zebrafish).